A 227-amino-acid polypeptide reads, in one-letter code: Protein MobD (227 aa).

The sequence is that of Protein MobD (mobD) from Acidithiobacillus ferrooxidans (Thiobacillus ferrooxidans).